Here is a 394-residue protein sequence, read N- to C-terminus: Elongation factor Tu (394 aa).

In terms of domain architecture, tr-type G spans 10–204 (KPHVNVGTIG…ALDSYIPEPE (195 aa)). The tract at residues 19–26 (GHVDHGKT) is G1. 19–26 (GHVDHGKT) is a GTP binding site. Residue threonine 26 participates in Mg(2+) binding. Positions 60 to 64 (GITIN) are G2. The G3 stretch occupies residues 81 to 84 (DCPG). GTP is bound by residues 81–85 (DCPGH) and 136–139 (NKCD). The interval 136–139 (NKCD) is G4. The interval 174–176 (SAL) is G5.

The protein belongs to the TRAFAC class translation factor GTPase superfamily. Classic translation factor GTPase family. EF-Tu/EF-1A subfamily. As to quaternary structure, monomer.

The protein localises to the cytoplasm. The enzyme catalyses GTP + H2O = GDP + phosphate + H(+). Its function is as follows. GTP hydrolase that promotes the GTP-dependent binding of aminoacyl-tRNA to the A-site of ribosomes during protein biosynthesis. This is Elongation factor Tu from Shewanella amazonensis (strain ATCC BAA-1098 / SB2B).